Reading from the N-terminus, the 529-residue chain is Low affinity inorganic phosphate transporter 5 (529 aa).

Residues 1–21 (MASNNLNVLNALDTAHTQWYH) lie on the Cytoplasmic side of the membrane. A helical membrane pass occupies residues 22-42 (VTAVVIAGMGFFTDAYDLFCI). The Extracellular portion of the chain corresponds to 43-71 (STISKLLGRLYYYDPHTHAPGKLPHTVNN). Residues 72-92 (WVTGVALVGTLTGQLVFGWLG) traverse the membrane as a helical segment. Topologically, residues 93 to 99 (DKLGRKK) are cytoplasmic. A helical transmembrane segment spans residues 100 to 120 (VYGLTLILMVICALSSGLSFG). Residues 121-124 (YSRK) lie on the Extracellular side of the membrane. Residues 125–145 (VVIGTLCFFRFWLGFGIGGDY) form a helical membrane-spanning segment. The Cytoplasmic portion of the chain corresponds to 146–163 (PLSATIMSEYANKRTRGA). The helical transmembrane segment at 164-184 (FIAAVFAMQGVGIIFAGLVLM) threads the bilayer. The Extracellular segment spans residues 185-211 (TVSKVFLMRYAGKAFSTDEVFSTEPEA). The helical transmembrane segment at 212–232 (DYVWRIVLMLGALPALLTYYW) threads the bilayer. Residues 233–291 (RMKMPETGRYTAIIEGNAKQAAIDMGKVLEIEIQAEGEKLAKFKSANDYSLLSNEFFQR) lie on the Cytoplasmic side of the membrane. A helical membrane pass occupies residues 292–312 (HGLHLIGTMSTWFLLDIAFYS). Topologically, residues 313–344 (QNLTQKDIFPTMGLVSDAKSISALREMFETSR) are extracellular. N-linked (GlcNAc...) asparagine glycosylation is present at N314. A helical membrane pass occupies residues 345–365 (AMFVIALLGTFPGYWFTVFFI). The Cytoplasmic segment spans residues 366–374 (EKIGRFKIQ). Residues 375–395 (LMGFFMMSIFMAIIGVRYDYL) form a helical membrane-spanning segment. Residues 396–405 (KTKDHKWTFA) lie on the Extracellular side of the membrane. A helical transmembrane segment spans residues 406-426 (ALYGLTFFFANSGPNSTTFVL). Residues 427–472 (PAELFPTRVRSTCHALSAASGKAGAMVSAFGVQQYTQDGEVHKIKK) lie on the Cytoplasmic side of the membrane. Residues 473–493 (AMLFLAFTNMVGFCCTFLVTE) traverse the membrane as a helical segment. Residues 494 to 529 (TKGRSLEEISGEDENQNETKMKGRPVSGGHQDDGWD) lie on the Extracellular side of the membrane. The disordered stretch occupies residues 500–529 (EEISGEDENQNETKMKGRPVSGGHQDDGWD). N-linked (GlcNAc...) asparagine glycosylation occurs at N510.

The protein belongs to the major facilitator superfamily. Phosphate:H(+) symporter (TC 2.A.1.9) family. Expressed at low levels in non-mycorrhized roots.

The protein localises to the cell membrane. The catalysed reaction is phosphate(in) + H(+)(in) = phosphate(out) + H(+)(out). Low-affinity transporter for external inorganic phosphate (Pi) probably involved in the acquisition of phosphate released by arbuscular mycorrhizal (AM) fungi during AM symbiosis. This is Low affinity inorganic phosphate transporter 5 from Petunia hybrida (Petunia).